The following is a 193-amino-acid chain: 7-methyl-GTP pyrophosphatase (193 aa).

Asp-68 acts as the Proton acceptor in catalysis.

It belongs to the Maf family. YceF subfamily. A divalent metal cation is required as a cofactor.

The protein resides in the cytoplasm. It carries out the reaction N(7)-methyl-GTP + H2O = N(7)-methyl-GMP + diphosphate + H(+). Functionally, nucleoside triphosphate pyrophosphatase that hydrolyzes 7-methyl-GTP (m(7)GTP). May have a dual role in cell division arrest and in preventing the incorporation of modified nucleotides into cellular nucleic acids. This chain is 7-methyl-GTP pyrophosphatase, found in Chromobacterium violaceum (strain ATCC 12472 / DSM 30191 / JCM 1249 / CCUG 213 / NBRC 12614 / NCIMB 9131 / NCTC 9757 / MK).